A 63-amino-acid chain; its full sequence is Overexpressed in colon carcinoma 1 protein homolog (63 aa).

Positions 1 to 10 (MGCGNSTATS) are enriched in polar residues. The segment at 1–37 (MGCGNSTATSAAAGRGKPGAVKDATEDSITEDDKRRN) is disordered.

This sequence belongs to the OCC1 family.

The chain is Overexpressed in colon carcinoma 1 protein homolog from Rattus norvegicus (Rat).